A 456-amino-acid polypeptide reads, in one-letter code: GTPase Der (456 aa).

EngA-type G domains lie at 3 to 167 and 185 to 360; these read FTIA…PPSD and IRVA…AVWN. GTP is bound by residues 9 to 16, 56 to 60, and 119 to 122; these read GRPNVGKS, DTAGL, and NKSE. The disordered stretch occupies residues 162-181; sequence IVPPSDDEDDEREETDEERA. A compositionally biased stretch (acidic residues) spans 166–178; it reads SDDEDDEREETDE. Residues 191-198, 238-242, and 303-306 contribute to the GTP site; these read GRPNAGKS, DTAGL, and NKWD. The KH-like domain maps to 361–445; the sequence is RRVPTAALNR…PVRITLREKA (85 aa).

This sequence belongs to the TRAFAC class TrmE-Era-EngA-EngB-Septin-like GTPase superfamily. EngA (Der) GTPase family. Associates with the 50S ribosomal subunit.

In terms of biological role, GTPase that plays an essential role in the late steps of ribosome biogenesis. In Bradyrhizobium sp. (strain ORS 278), this protein is GTPase Der.